The chain runs to 131 residues: MAKSSPTYTVLFLLGLLALSTATTTFQNEGQRSLIGQFNSRGTFKKIKNHPSESVQRSNEDFAMHKTKLKHKFVARSGGETDVKKMEGSMPDQGKTAGRDQQVTVQNIKEASKENVGGNTNDIYKSGGMHH.

Positions 1-22 (MAKSSPTYTVLFLLGLLALSTA) are cleaved as a signal peptide. The disordered stretch occupies residues 75-101 (ARSGGETDVKKMEGSMPDQGKTAGRDQ).

Tapetum of anthers.

The protein is Protein TAP2 (TAP2) of Antirrhinum majus (Garden snapdragon).